The following is a 337-amino-acid chain: Nicotinate-nucleotide--dimethylbenzimidazole phosphoribosyltransferase (337 aa).

Glutamate 305 functions as the Proton acceptor in the catalytic mechanism.

This sequence belongs to the CobT family.

It catalyses the reaction 5,6-dimethylbenzimidazole + nicotinate beta-D-ribonucleotide = alpha-ribazole 5'-phosphate + nicotinate + H(+). The protein operates within nucleoside biosynthesis; alpha-ribazole biosynthesis; alpha-ribazole from 5,6-dimethylbenzimidazole: step 1/2. Functionally, catalyzes the synthesis of alpha-ribazole-5'-phosphate from nicotinate mononucleotide (NAMN) and 5,6-dimethylbenzimidazole (DMB). In Roseobacter denitrificans (strain ATCC 33942 / OCh 114) (Erythrobacter sp. (strain OCh 114)), this protein is Nicotinate-nucleotide--dimethylbenzimidazole phosphoribosyltransferase.